The chain runs to 155 residues: Ribosomal RNA large subunit methyltransferase H (155 aa).

S-adenosyl-L-methionine contacts are provided by residues leucine 73, glycine 104, and 123-128; that span reads LSALTL.

This sequence belongs to the RNA methyltransferase RlmH family. As to quaternary structure, homodimer.

It localises to the cytoplasm. The catalysed reaction is pseudouridine(1915) in 23S rRNA + S-adenosyl-L-methionine = N(3)-methylpseudouridine(1915) in 23S rRNA + S-adenosyl-L-homocysteine + H(+). Specifically methylates the pseudouridine at position 1915 (m3Psi1915) in 23S rRNA. This is Ribosomal RNA large subunit methyltransferase H from Coxiella burnetii (strain Dugway 5J108-111).